Here is a 1016-residue protein sequence, read N- to C-terminus: Probably inactive leucine-rich repeat receptor-like protein kinase At3g28040 (1016 aa).

Positions 1–26 (MGKQRRTMISFTLFLTLTMMSSLING) are cleaved as a signal peptide. Residues 27–646 (DTDSIQLNDD…FHRRMFLSVS (620 aa)) lie on the Extracellular side of the membrane. 20 LRR repeats span residues 102–124 (RLKV…SNNN), 125–147 (HLQK…LGSI), 149–171 (SLQH…LFNN), 174–196 (SLRY…LFRC), 198–219 (VLNS…VSGI), 224–245 (RLRA…GILS), 248–270 (NLKE…IGLC), 272–295 (HLNR…QKLK), 296–318 (SLNH…IGDM), 320–342 (GLVH…ISNL), 344–366 (SLKD…LESC), 368–390 (ELMI…FFDL), 391–413 (GLQE…SSRL), 416–438 (SLIR…VGLF), 440–462 (HMRY…IEFL), 464–486 (NLTV…ICES), 488–510 (SLQI…IGNC), 512–535 (SLKL…SNLQ), 536–559 (ELKI…GDLQ), and 560–582 (NLLL…DVFQ). N-linked (GlcNAc...) asparagine glycans are attached at residues asparagine 112, asparagine 135, and asparagine 171. Residue asparagine 203 is glycosylated (N-linked (GlcNAc...) asparagine). N-linked (GlcNAc...) asparagine glycosylation occurs at asparagine 349. 4 N-linked (GlcNAc...) asparagine glycosylation sites follow: asparagine 445, asparagine 464, asparagine 509, and asparagine 522. An N-linked (GlcNAc...) asparagine glycan is attached at asparagine 565. The helical transmembrane segment at 647–667 (VIVAISAAILIFSGVIIITLL) threads the bilayer. At 668-1016 (NASVRRRLAF…PVPHRIMDSF (349 aa)) the chain is on the cytoplasmic side. Positions 726-1013 (LNKASRIGEG…INSPVPHRIM (288 aa)) constitute a Protein kinase domain. ATP is bound by residues 732–740 (IGEGVFGTV) and lysine 755. Tyrosine 841 and tyrosine 898 each carry phosphotyrosine.

Belongs to the protein kinase superfamily. Ser/Thr protein kinase family.

The protein resides in the membrane. This Arabidopsis thaliana (Mouse-ear cress) protein is Probably inactive leucine-rich repeat receptor-like protein kinase At3g28040.